The following is a 349-amino-acid chain: N-acetyl-gamma-glutamyl-phosphate reductase (349 aa).

C152 is an active-site residue.

The protein belongs to the NAGSA dehydrogenase family. Type 1 subfamily.

The protein localises to the cytoplasm. It catalyses the reaction N-acetyl-L-glutamate 5-semialdehyde + phosphate + NADP(+) = N-acetyl-L-glutamyl 5-phosphate + NADPH + H(+). It functions in the pathway amino-acid biosynthesis; L-arginine biosynthesis; N(2)-acetyl-L-ornithine from L-glutamate: step 3/4. Functionally, catalyzes the NADPH-dependent reduction of N-acetyl-5-glutamyl phosphate to yield N-acetyl-L-glutamate 5-semialdehyde. In Clavibacter sepedonicus (Clavibacter michiganensis subsp. sepedonicus), this protein is N-acetyl-gamma-glutamyl-phosphate reductase.